The following is a 411-amino-acid chain: Heparan-sulfate 6-O-sulfotransferase 1 (411 aa).

The Cytoplasmic portion of the chain corresponds to 11 to 17; it reads MVERASK. The helical; Signal-anchor for type II membrane protein transmembrane segment at 18-37 threads the bilayer; the sequence is FVLVVAGSVCFMLILYQYAG. At 38–411 the chain is on the lumenal side; that stretch reads PGLSLGAPGG…DYMSHIIEKW (374 aa). Position 93 to 101 (93 to 101) interacts with 3'-phosphoadenylyl sulfate; the sequence is HIQKTGGTT. Residues 123–124, Arg140, Trp145, and His150 contribute to the substrate site; that span reads KK. The active-site Proton acceptor is the His150. Arg185 and Ser193 together coordinate 3'-phosphoadenylyl sulfate. Substrate is bound by residues His197 and Trp204. Asn264 carries N-linked (GlcNAc...) asparagine glycosylation. Position 317–319 (317–319) interacts with 3'-phosphoadenylyl sulfate; the sequence is MQY. Asn320 is a glycosylation site (N-linked (GlcNAc...) asparagine). 323–324 provides a ligand contact to 3'-phosphoadenylyl sulfate; sequence RA. Positions 352-387 form a coiled coil; that stretch reads KDLFQQRYQYKRQLERREQRLRSREERLLHRAKEAL.

This sequence belongs to the sulfotransferase 6 family. In terms of processing, N-glycosylated. As to expression, expressed in fetal brain.

Its subcellular location is the membrane. The enzyme catalyses alpha-D-glucosaminyl-[heparan sulfate](n) + 3'-phosphoadenylyl sulfate = 6-sulfo-alpha-D-glucosaminyl-[heparan sulfate](n) + adenosine 3',5'-bisphosphate + H(+). Its function is as follows. 6-O-sulfation enzyme which catalyzes the transfer of sulfate from 3'-phosphoadenosine 5'-phosphosulfate (PAPS) to position 6 of the N-sulfoglucosamine residue (GlcNS) of heparan sulfate. Critical for normal neuronal development where it may play a role in neuron branching. May also play a role in limb development. May prefer iduronic acid. The sequence is that of Heparan-sulfate 6-O-sulfotransferase 1 from Homo sapiens (Human).